Consider the following 441-residue polypeptide: GTPase Der (441 aa).

2 consecutive EngA-type G domains span residues 2-164 and 173-343; these read QKVA…PADE and IRIS…EKWQ. GTP contacts are provided by residues 8-15, 55-59, 116-119, 179-186, 226-230, and 288-291; these read GRPNVGKS, DTGGL, NKID, DTAGI, and NKWD. One can recognise a KH-like domain in the interval 344–428; the sequence is SRIPTAELNR…PVRLKWKEKG (85 aa).

This sequence belongs to the TRAFAC class TrmE-Era-EngA-EngB-Septin-like GTPase superfamily. EngA (Der) GTPase family. Associates with the 50S ribosomal subunit.

Functionally, GTPase that plays an essential role in the late steps of ribosome biogenesis. The sequence is that of GTPase Der from Deinococcus geothermalis (strain DSM 11300 / CIP 105573 / AG-3a).